The primary structure comprises 364 residues: Histidinol-phosphate aminotransferase (364 aa).

The residue at position 224 (K224) is an N6-(pyridoxal phosphate)lysine.

The protein belongs to the class-II pyridoxal-phosphate-dependent aminotransferase family. Histidinol-phosphate aminotransferase subfamily. In terms of assembly, homodimer. Pyridoxal 5'-phosphate serves as cofactor.

The enzyme catalyses L-histidinol phosphate + 2-oxoglutarate = 3-(imidazol-4-yl)-2-oxopropyl phosphate + L-glutamate. Its pathway is amino-acid biosynthesis; L-histidine biosynthesis; L-histidine from 5-phospho-alpha-D-ribose 1-diphosphate: step 7/9. The polypeptide is Histidinol-phosphate aminotransferase (Anaeromyxobacter sp. (strain Fw109-5)).